The chain runs to 509 residues: Dihydrolipoyl dehydrogenase, mitochondrial (509 aa).

A mitochondrion-targeting transit peptide spans 1–35; that stretch reads MQSWSRVYCSLAKRGHFNRISHGLQGLSAVPLRTY. Lysine 66 is subject to N6-acetyllysine; alternate. At lysine 66 the chain carries N6-succinyllysine; alternate. FAD-binding positions include 71-80 and lysine 89; that span reads EKNETLGGTC. Residues cysteine 80 and cysteine 85 are joined by a disulfide bond. 4 positions are modified to N6-acetyllysine; alternate: lysine 104, lysine 122, lysine 132, and lysine 143. An N6-succinyllysine; alternate mark is found at lysine 104, lysine 122, lysine 132, and lysine 143. Glycine 154 lines the FAD pocket. An N6-succinyllysine mark is found at lysine 159 and lysine 166. Position 183-185 (183-185) interacts with FAD; that stretch reads TGS. NAD(+) contacts are provided by residues 220-227 and glutamate 243; that span reads GAGVIGVE. 2 positions are modified to N6-succinyllysine: lysine 273 and lysine 277. Valine 278 provides a ligand contact to NAD(+). Phosphoserine occurs at positions 285 and 297. Glycine 314 contacts NAD(+). At lysine 346 the chain carries N6-acetyllysine. FAD contacts are provided by residues aspartate 355 and 361-364; that span reads MLAH. Residue lysine 410 is modified to N6-acetyllysine; alternate. N6-succinyllysine; alternate is present on lysine 410. An N6-acetyllysine mark is found at lysine 417 and lysine 420. Residue lysine 430 is modified to N6-succinyllysine. Histidine 487 (proton acceptor) is an active-site residue. Serine 502 carries the phosphoserine modification. Lysine 505 carries the post-translational modification N6-acetyllysine; alternate. N6-succinyllysine; alternate is present on lysine 505.

It belongs to the class-I pyridine nucleotide-disulfide oxidoreductase family. In terms of assembly, homodimer. Part of the multimeric pyruvate dehydrogenase complex that contains multiple copies of pyruvate dehydrogenase (subunits PDHA (PDHA1 or PDHA2) and PDHB, E1), dihydrolipoamide acetyltransferase (DLAT, E2) and lipoamide dehydrogenase (DLD, E3). These subunits are bound to an inner core composed of about 48 DLAT and 12 PDHX molecules (by non covalent bonds). The 2-oxoglutarate dehydrogenase complex is composed of OGDH (2-oxoglutarate dehydrogenase; E1), DLST (dihydrolipoamide succinyltransferase; E2), DLD (dihydrolipoamide dehydrogenase; E3) and the assembly factor KGD4. It contains multiple copies of the three enzymatic components (E1, E2 and E3). In the nucleus, the 2-oxoglutarate dehydrogenase complex associates with KAT2A. Interacts with PDHX. It depends on FAD as a cofactor. Post-translationally, tyrosine phosphorylated.

It localises to the mitochondrion matrix. It is found in the nucleus. Its subcellular location is the cell projection. The protein localises to the cilium. The protein resides in the flagellum. It localises to the cytoplasmic vesicle. It is found in the secretory vesicle. Its subcellular location is the acrosome. The enzyme catalyses N(6)-[(R)-dihydrolipoyl]-L-lysyl-[protein] + NAD(+) = N(6)-[(R)-lipoyl]-L-lysyl-[protein] + NADH + H(+). Lipoamide dehydrogenase is a component of the glycine cleavage system as well as an E3 component of three alpha-ketoacid dehydrogenase complexes (pyruvate-, alpha-ketoglutarate-, and branched-chain amino acid-dehydrogenase complex). The 2-oxoglutarate dehydrogenase complex is mainly active in the mitochondrion. A fraction of the 2-oxoglutarate dehydrogenase complex also localizes in the nucleus and is required for lysine succinylation of histones: associates with KAT2A on chromatin and provides succinyl-CoA to histone succinyltransferase KAT2A. In monomeric form may have additional moonlighting function as serine protease. Involved in the hyperactivation of spermatazoa during capacitation and in the spermatazoal acrosome reaction. The polypeptide is Dihydrolipoyl dehydrogenase, mitochondrial (DLD) (Macaca fascicularis (Crab-eating macaque)).